The chain runs to 87 residues: Small ribosomal subunit protein bS20 (87 aa).

The protein belongs to the bacterial ribosomal protein bS20 family.

In terms of biological role, binds directly to 16S ribosomal RNA. The protein is Small ribosomal subunit protein bS20 of Nitrosomonas europaea (strain ATCC 19718 / CIP 103999 / KCTC 2705 / NBRC 14298).